The primary structure comprises 73 residues: MAPQTLLLVLVLCVLLLQAQGGYRDKMRMQRIKVCEKRPSIDLCIHHCSYFQKCETNKICCSAFCGNICMSIL.

The first 21 residues, 1 to 21 (MAPQTLLLVLVLCVLLLQAQG), serve as a signal peptide directing secretion. Residues 28 to 73 (RMQRIKVCEKRPSIDLCIHHCSYFQKCETNKICCSAFCGNICMSIL) enclose the WAP domain.

Ubiquitously expressed.

It is found in the secreted. This is Protein WFDC10B (WFDC10B) from Homo sapiens (Human).